We begin with the raw amino-acid sequence, 224 residues long: PKHD-type hydroxylase tll1907 (224 aa).

The 100-residue stretch at 77 to 176 (KIIGPLLFSR…RLVAVAWVQS (100 aa)) folds into the Fe2OG dioxygenase domain. Fe cation-binding residues include His-96, Asp-98, and His-157. Residue Arg-167 participates in 2-oxoglutarate binding.

Fe(2+) is required as a cofactor. The cofactor is L-ascorbate.

In Thermosynechococcus vestitus (strain NIES-2133 / IAM M-273 / BP-1), this protein is PKHD-type hydroxylase tll1907.